The chain runs to 1028 residues: Contactin-3 (1028 aa).

The signal sequence occupies residues 1 to 19; the sequence is MMLSWKQLILLSFIGCLAG. 6 consecutive Ig-like C2-type domains span residues 32–117, 122–209, 227–313, 318–402, 408–497, and 499–593; these read PSNS…AKLQ, ENFK…RVLG, PKIE…GRLT, PYWL…AELK, PDFS…LVVT, and PTRI…AELI. Cystine bridges form between cysteine 50/cysteine 100, cysteine 144/cysteine 196, cysteine 249/cysteine 297, cysteine 339/cysteine 386, and cysteine 431/cysteine 479. 2 N-linked (GlcNAc...) asparagine glycosylation sites follow: asparagine 65 and asparagine 193. Residues asparagine 377, asparagine 468, and asparagine 489 are each glycosylated (N-linked (GlcNAc...) asparagine). An intrachain disulfide couples cysteine 521 to cysteine 577. Fibronectin type-III domains follow at residues 600–698, 703–800, 805–901, and 902–998; these read PPEN…TEEA, APSE…SAEE, APSH…TKKT, and PPSQ…TSMD. Positions 684 to 714 are disordered; sequence GEPSLPSEKVRTEEAAPEIAPSEVSGGGGSR. Asparagine 765, asparagine 860, asparagine 895, asparagine 913, asparagine 931, and asparagine 956 each carry an N-linked (GlcNAc...) asparagine glycan. The GPI-anchor amidated serine moiety is linked to residue serine 1002. The propeptide at 1003 to 1028 is removed in mature form; that stretch reads TSAISNIHPLSGYMSVLLFFIVNALW.

The protein belongs to the immunoglobulin superfamily. Contactin family. Interacts with PTPRG. Specifically expressed in brain. Ectopically expressed in tumors expressing endogenous intracisternal A-type particles (IAPs).

It is found in the cell membrane. In terms of biological role, contactins mediate cell surface interactions during nervous system development. Has some neurite outgrowth-promoting activity. The polypeptide is Contactin-3 (Cntn3) (Mus musculus (Mouse)).